The primary structure comprises 398 residues: Growth-regulating factor 3 (398 aa).

Low complexity predominate over residues 1–17 (MDLQLKQWRSQQQQQHQ). A disordered region spans residues 1 to 32 (MDLQLKQWRSQQQQQHQTESEEQPSAAKIPKH). One can recognise a QLQ domain in the interval 76 to 111 (FFSWAQWQELELQALIYRYMLAGAAVPQELLLPIKK). A WRC domain is found at 144–188 (DPEPGRCRRTDGKKWRCSRDVFAGHKYCERHMHRGRNRSRKPVET). 2 consecutive short sequence motifs (bipartite nuclear localization signal) follow at residues 149 to 159 (RCRRTDGKKWR) and 177 to 184 (RGRNRSRK). Polar residues-rich tracts occupy residues 299–350 (SLQE…RDQQ) and 383–398 (PTSVLHQLGVSTQAFH). The disordered stretch occupies residues 299 to 398 (SLQEADNSSS…QLGVSTQAFH (100 aa)).

It belongs to the GRF family. In terms of tissue distribution, strongly expressed in actively growing and developing tissues, such as roots, upper stems, and shoot tips containing the shoot apical meristem (SAM) and flower buds. Also expressed in mature flowers, but weakly expressed in mature stems and leaves.

It is found in the nucleus. Functionally, transcription activator that plays a role in the regulation of cell expansion in leaf and cotyledons tissues. Component of a network formed by miR396, the GRFs and their interacting factors (GIFs) acting in the regulation of meristem function, at least partially through the control of cell proliferation. microRNA396-GRF1/GRF3 regulatory module acts as a developmental regulator in the reprogramming of root cells during cyst nematode infection, leading to the formation of the syncytium. This chain is Growth-regulating factor 3 (GRF3), found in Arabidopsis thaliana (Mouse-ear cress).